A 168-amino-acid polypeptide reads, in one-letter code: Endoribonuclease YbeY (168 aa).

The Zn(2+) site is built by His122, His126, and His132.

This sequence belongs to the endoribonuclease YbeY family. It depends on Zn(2+) as a cofactor.

Its subcellular location is the cytoplasm. Single strand-specific metallo-endoribonuclease involved in late-stage 70S ribosome quality control and in maturation of the 3' terminus of the 16S rRNA. In Brucella abortus (strain 2308), this protein is Endoribonuclease YbeY.